Consider the following 88-residue polypeptide: Large ribosomal subunit protein bL31B (88 aa).

This sequence belongs to the bacterial ribosomal protein bL31 family. Type B subfamily. As to quaternary structure, part of the 50S ribosomal subunit.

In Corynebacterium glutamicum (strain R), this protein is Large ribosomal subunit protein bL31B.